A 113-amino-acid chain; its full sequence is UPF0482 protein KPN78578_15540 (113 aa).

Residues 1–28 (MNMTLNKRWCLTAILALSAVVYTSSSYA) form the signal peptide. The tract at residues 38-60 (GDSAQSRQQASMEKEQWNDTRSL) is disordered. The span at 39–48 (DSAQSRQQAS) shows a compositional bias: polar residues. Over residues 49–59 (MEKEQWNDTRS) the composition is skewed to basic and acidic residues.

Belongs to the UPF0482 family.

In Klebsiella pneumoniae subsp. pneumoniae (strain ATCC 700721 / MGH 78578), this protein is UPF0482 protein KPN78578_15540.